We begin with the raw amino-acid sequence, 1120 residues long: Elongation factor-like GTPase 1 (1120 aa).

The tr-type G domain occupies 17 to 272 (ANIRNICVLA…LMKTLWGDYY (256 aa)). GTP contacts are provided by residues 26–33 (AHVDHGKT), 92–96 (DSPGH), and 146–149 (NKID). A disordered region spans residues 430-496 (PRPLTQEEIA…VESMTPKPVL (67 aa)). 2 stretches are compositionally biased toward basic and acidic residues: residues 438-452 (IAQR…HAEK) and 475-484 (PKGEEPRGDE). Lys-528 is subject to N6-acetyllysine. A disordered region spans residues 907 to 930 (ASDLAKEGQEENETCSGGNENQEL). Residues 920–930 (TCSGGNENQEL) are compositionally biased toward polar residues.

This sequence belongs to the TRAFAC class translation factor GTPase superfamily. Classic translation factor GTPase family. As to quaternary structure, associates with the 60S ribosomal subunit. Found in a complex consisting of the 60S ribosomal subunit, SBDS and EFL1. Interacts with SBDS and binds to GTP and GDP; the interaction with SBDS decreases EFL1 affinity for GDP and facilitates GDP release. Expressed at low levels in brain. Expression is highly increased in glioma tissues.

It catalyses the reaction GTP + H2O = GDP + phosphate + H(+). GTPase activity is stimulated in the presence of 60S ribosome subunits. Functionally, GTPase involved in the biogenesis of the 60S ribosomal subunit and translational activation of ribosomes. Together with SBDS, triggers the GTP-dependent release of EIF6 from 60S pre-ribosomes in the cytoplasm, thereby activating ribosomes for translation competence by allowing 80S ribosome assembly and facilitating EIF6 recycling to the nucleus, where it is required for 60S rRNA processing and nuclear export. The protein is Elongation factor-like GTPase 1 of Homo sapiens (Human).